The following is a 159-amino-acid chain: Ribonuclease H (159 aa).

The 142-residue stretch at M1 to Q142 folds into the RNase H type-1 domain. Mg(2+) contacts are provided by D10, E48, D70, and D134. Positions E135–T159 are disordered. Residues T145 to T159 show a composition bias toward basic and acidic residues.

The protein belongs to the RNase H family. As to quaternary structure, monomer. Requires Mg(2+) as cofactor.

The protein resides in the cytoplasm. It carries out the reaction Endonucleolytic cleavage to 5'-phosphomonoester.. Functionally, endonuclease that specifically degrades the RNA of RNA-DNA hybrids. This Proteus mirabilis (strain HI4320) protein is Ribonuclease H.